Reading from the N-terminus, the 183-residue chain is MFKLVRAKGIVRIPPEYFGQSVDEIAIKILRQEYQEKLIKDIGVVLGIVNAKASEEGFIIFGDGATYHEVEFDMLVYTPIIHEVIEGEVSQVDNYGVYVNMGPVDGLVHISQITDDNLKFDSNRGILIGEKSKKSIQKGDRVRAMIISASMSSGRLPRIALTMKQPYLGKIEWINQEIAKASK.

The S1 motif domain maps to 82-164 (HEVIEGEVSQ…RLPRIALTMK (83 aa)).

The protein belongs to the eukaryotic RPB7/RPC8 RNA polymerase subunit family. In terms of assembly, part of the 13-subunit RNA polymerase complex. Forms a stalk with Rpo4 that extends from the main structure.

Its subcellular location is the cytoplasm. It catalyses the reaction RNA(n) + a ribonucleoside 5'-triphosphate = RNA(n+1) + diphosphate. DNA-dependent RNA polymerase (RNAP) catalyzes the transcription of DNA into RNA using the four ribonucleoside triphosphates as substrates. In terms of biological role, reconstitution experiments show this subunit is required for basic activity. This Sulfolobus acidocaldarius (strain ATCC 33909 / DSM 639 / JCM 8929 / NBRC 15157 / NCIMB 11770) protein is DNA-directed RNA polymerase subunit Rpo7.